A 556-amino-acid polypeptide reads, in one-letter code: Outer spore wall assembly protein SHE10 (556 aa).

The N-terminal stretch at 1-21 (MRFLTKFLLFLATVYFGLKYA) is a signal peptide. The stretch at 135 to 201 (NKNLKRHVER…KQITSDVKKT (67 aa)) forms a coiled coil. The segment covering 190 to 208 (EAKQITSDVKKTVESEIKK) has biased composition (basic and acidic residues). 2 disordered regions span residues 190–263 (EAKQ…EDIT) and 534–556 (RKEA…PISA). Residues 220-244 (IVSTSTIVKTITRTRHSSSSTTSTK) are compositionally biased toward low complexity. Over residues 245 to 256 (SAEETSEKNLET) the composition is skewed to basic and acidic residues. The stretch at 481 to 547 (KISEFKLLLD…GEVNESSEEE (67 aa)) forms a coiled coil.

It belongs to the SHE10 family. In terms of assembly, component of the mitochondria-localized RNase mitochondrial RNA-processing (RNase MRP) composed of one single RNA encoded by the NME1 gene and at least 31 proteins. Absent in the nucleus-localized RNase MRP (NuMRP).

The protein resides in the mitochondrion. Its function is as follows. Involved in spore wall assembly. May be a component of the mitochondrial RNase MRP (MtMRP), a ribonucleoprotein endoribonuclease involved in the cleaving RNA transcripts to generate primers for DNA replication in mitochondria. In Candida glabrata (strain ATCC 2001 / BCRC 20586 / JCM 3761 / NBRC 0622 / NRRL Y-65 / CBS 138) (Yeast), this protein is Outer spore wall assembly protein SHE10.